The primary structure comprises 482 residues: Cytochrome c-552 (482 aa).

The signal sequence occupies residues 1-26 (MIKVSNALQRILIGAALALFGGGAQA). Residue H98 coordinates heme c. Residues C126, C129, and K130 each coordinate heme. Heme c-binding residues include C164, C167, H168, C213, C216, and H217. Ca(2+) is bound by residues E219, Y220, K265, and Q267. Y220 is a substrate binding site. H268 contacts substrate. Residues H279, C286, C289, H290, H305, C318, C321, H322, and H397 each coordinate heme c.

The protein belongs to the cytochrome c-552 family. It depends on Ca(2+) as a cofactor. Heme c serves as cofactor.

Its subcellular location is the periplasm. It catalyses the reaction 6 Fe(III)-[cytochrome c] + NH4(+) + 2 H2O = 6 Fe(II)-[cytochrome c] + nitrite + 8 H(+). It functions in the pathway nitrogen metabolism; nitrate reduction (assimilation). Catalyzes the reduction of nitrite to ammonia, consuming six electrons in the process. The protein is Cytochrome c-552 of Edwardsiella ictaluri (strain 93-146).